The primary structure comprises 84 residues: Chymotrypsin inhibitor Ani s 6 (84 aa).

Residues methionine 1–lysine 22 form the signal peptide. Intrachain disulfides connect cysteine 25–cysteine 58, cysteine 34–cysteine 54, cysteine 38–cysteine 50, cysteine 42–cysteine 79, and cysteine 60–cysteine 73. In terms of domain architecture, TIL spans cysteine 25 to cysteine 79.

This sequence belongs to the serine protease inhibitor-like (TIL domain-containing) family.

It localises to the secreted. Functionally, inhibits alpha-chymotrypsin, but not trypsin. The polypeptide is Chymotrypsin inhibitor Ani s 6 (Anisakis simplex (Herring worm)).